The primary structure comprises 138 residues: Basic phospholipase A2 chain HDP-1P (138 aa).

A signal peptide spans 1 to 16 (MRILWIVAVCLIGVEG). Cystine bridges form between cysteine 42-cysteine 131, cysteine 44-cysteine 60, cysteine 59-cysteine 111, cysteine 65-cysteine 138, cysteine 66-cysteine 104, cysteine 73-cysteine 97, and cysteine 91-cysteine 102. Ca(2+)-binding residues include tyrosine 43, glycine 45, and glycine 47. Histidine 63 is a catalytic residue. Aspartate 64 provides a ligand contact to Ca(2+). Aspartate 105 is an active-site residue.

In terms of assembly, heterodimer; non-covalently linked. The toxic basic protein has phospholipase A2 activity (chain HDP-1P) and the non-toxic acidic protein functions as its inhibitor (chain HPD-1I (AC A4VBF0)). Ca(2+) is required as a cofactor. As to expression, expressed by the venom gland.

The protein localises to the secreted. It carries out the reaction a 1,2-diacyl-sn-glycero-3-phosphocholine + H2O = a 1-acyl-sn-glycero-3-phosphocholine + a fatty acid + H(+). Enzymatic activity and neurotoxicity are inhibited by Triton X-100, which has been determined to be located in the center of the hydrophobic channel of the enzyme. In terms of biological role, heterodimer: shows the same activities as the monomer, but with a lower potency. Monomer: snake venom phospholipase A2 (PLA2) that shows presynaptic neurotoxicity, anticoagulant activity and that weakly inhibits ADP-induced platelet aggregation. Inhibits exocytosis in pancreatic beta cells, confirming it can act presynaptically in inhibiting the exocytosis of neurotransmitters in neurons. PLA2 catalyzes the calcium-dependent hydrolysis of the 2-acyl groups in 3-sn-phosphoglycerides. The protein is Basic phospholipase A2 chain HDP-1P of Vipera nikolskii (Nikolsky's adder).